The chain runs to 345 residues: N-acetyl-gamma-glutamyl-phosphate reductase (345 aa).

Cysteine 149 is an active-site residue.

It belongs to the NAGSA dehydrogenase family. Type 1 subfamily.

It localises to the cytoplasm. The enzyme catalyses N-acetyl-L-glutamate 5-semialdehyde + phosphate + NADP(+) = N-acetyl-L-glutamyl 5-phosphate + NADPH + H(+). The protein operates within amino-acid biosynthesis; L-arginine biosynthesis; N(2)-acetyl-L-ornithine from L-glutamate: step 3/4. Its function is as follows. Catalyzes the NADPH-dependent reduction of N-acetyl-5-glutamyl phosphate to yield N-acetyl-L-glutamate 5-semialdehyde. This Bacillus subtilis (strain 168) protein is N-acetyl-gamma-glutamyl-phosphate reductase.